Reading from the N-terminus, the 354-residue chain is Probable serine acetyltransferase 2 (354 aa).

It belongs to the transferase hexapeptide repeat family. In terms of assembly, homomultimer.

The enzyme catalyses L-serine + acetyl-CoA = O-acetyl-L-serine + CoA. It participates in amino-acid biosynthesis; L-cysteine biosynthesis; L-cysteine from L-serine: step 1/2. The chain is Probable serine acetyltransferase 2 (SAT2) from Oryza sativa subsp. japonica (Rice).